A 453-amino-acid chain; its full sequence is tRNA modification GTPase MnmE (453 aa).

(6S)-5-formyl-5,6,7,8-tetrahydrofolate contacts are provided by Arg-22, Glu-79, and Lys-119. A TrmE-type G domain is found at 215–376 (GMKVVIAGRP…LRQHLKECMG (162 aa)). K(+) is bound at residue Asn-225. GTP is bound by residues 225–230 (NAGKSS), 244–250 (TDIAGTT), 269–272 (DTAG), and 334–337 (NKAD). Ser-229 serves as a coordination point for Mg(2+). K(+) is bound by residues Thr-244, Ile-246, and Thr-249. Residue Thr-250 coordinates Mg(2+). Lys-453 contacts (6S)-5-formyl-5,6,7,8-tetrahydrofolate.

The protein belongs to the TRAFAC class TrmE-Era-EngA-EngB-Septin-like GTPase superfamily. TrmE GTPase family. As to quaternary structure, homodimer. Heterotetramer of two MnmE and two MnmG subunits. K(+) is required as a cofactor.

It is found in the cytoplasm. Functionally, exhibits a very high intrinsic GTPase hydrolysis rate. Involved in the addition of a carboxymethylaminomethyl (cmnm) group at the wobble position (U34) of certain tRNAs, forming tRNA-cmnm(5)s(2)U34. In Vibrio cholerae serotype O1 (strain ATCC 39315 / El Tor Inaba N16961), this protein is tRNA modification GTPase MnmE.